The following is a 252-amino-acid chain: 1-(5-phosphoribosyl)-5-[(5-phosphoribosylamino)methylideneamino] imidazole-4-carboxamide isomerase (252 aa).

The Proton acceptor role is filled by aspartate 10. Aspartate 129 serves as the catalytic Proton donor.

It belongs to the HisA/HisF family.

The protein localises to the cytoplasm. The enzyme catalyses 1-(5-phospho-beta-D-ribosyl)-5-[(5-phospho-beta-D-ribosylamino)methylideneamino]imidazole-4-carboxamide = 5-[(5-phospho-1-deoxy-D-ribulos-1-ylimino)methylamino]-1-(5-phospho-beta-D-ribosyl)imidazole-4-carboxamide. Its pathway is amino-acid biosynthesis; L-histidine biosynthesis; L-histidine from 5-phospho-alpha-D-ribose 1-diphosphate: step 4/9. This chain is 1-(5-phosphoribosyl)-5-[(5-phosphoribosylamino)methylideneamino] imidazole-4-carboxamide isomerase, found in Frankia casuarinae (strain DSM 45818 / CECT 9043 / HFP020203 / CcI3).